The following is a 373-amino-acid chain: LIM domain-binding protein 2 (373 aa).

2 disordered regions span residues 244-291 (APPA…ANLS) and 327-373 (QYDA…QASQ). The span at 263 to 280 (STSSTSNSSAGNNANSTG) shows a compositional bias: low complexity. The 40-residue stretch at 298–337 (DVMVVGEPTLMGGEFGDEDERLITRLENTQYDAANGMDDE) folds into the LIM interaction domain (LID) domain. A compositionally biased stretch (polar residues) spans 341–361 (NNSPALGNNSPWNSKPPATQE).

This sequence belongs to the LDB family. Interacts with LHX9. Interacts with SLK; leading to negatively regulate SLK kinase activity. Interacts with LMO4. In terms of processing, ubiquitinated by RLIM/RNF12, leading to its degradation by the proteasome.

The protein resides in the nucleus. Transcription cofactor. Binds to the LIM domain of a wide variety of LIM domain-containing transcription factors. This Homo sapiens (Human) protein is LIM domain-binding protein 2 (LDB2).